The chain runs to 159 residues: Ribosome maturation factor RimP (159 aa).

Belongs to the RimP family.

It is found in the cytoplasm. Functionally, required for maturation of 30S ribosomal subunits. The chain is Ribosome maturation factor RimP from Streptococcus pneumoniae serotype 19F (strain G54).